The following is a 319-amino-acid chain: MEPILAKNPNRFVIFPIQYHDIWNMYKKAEASFWTVEEVDISKDINDWNKLTPDEKYFIKHVLAFFAASDGIVNENLAERFCIEVQITEARCFYGFQMAIENIHSEMYSLLIDTYVKDSNEKNYLFNAIETMPCVKKKADWAQKWIHDSASYGERLIAFAAVEGIFFSGSFASIFWLKKRGLMPGLTFSNELISRDEGLHCDFACLMFKHLLYPPSEETVRSIITDAVSIEQEFLTVALPVKLIGMNCEMMKTYIKFVADRLISELGFKKIYNVTNPFDFMENISLEGKTNFFEKRVGEYQKMGVMSQEDNHFSLDVDF.

The Fe cation site is built by aspartate 70, glutamate 101, and histidine 104. Tyrosine 108 is an active-site residue. Positions 163, 197, and 200 each coordinate Fe cation. The interaction with R1 stretch occupies residues 313 to 319 (FSLDVDF).

Belongs to the ribonucleoside diphosphate reductase small chain family. Interacts with RNR1/OPG080 subunit. Can interact with host RNR1 supunit. Fe cation serves as cofactor.

The catalysed reaction is a 2'-deoxyribonucleoside 5'-diphosphate + [thioredoxin]-disulfide + H2O = a ribonucleoside 5'-diphosphate + [thioredoxin]-dithiol. Its function is as follows. Ribonucleoside-diphosphate reductase holoenzyme provides the precursors necessary for viral DNA synthesis. Allows virus growth in non-dividing cells. Catalyzes the biosynthesis of deoxyribonucleotides from the corresponding ribonucleotides. This Variola virus protein is Ribonucleoside-diphosphate reductase small chain (OPG048).